The following is a 239-amino-acid chain: Ribosomal RNA small subunit methyltransferase G (239 aa).

Residues glycine 79, phenylalanine 84, 130–131, and arginine 149 each bind S-adenosyl-L-methionine; that span reads AE. Positions 218–227 are enriched in basic residues; the sequence is KHKKTPKKYP. The disordered stretch occupies residues 218–239; sequence KHKKTPKKYPRQAGTPNKKPIA.

This sequence belongs to the methyltransferase superfamily. RNA methyltransferase RsmG family.

It localises to the cytoplasm. In terms of biological role, specifically methylates the N7 position of a guanine in 16S rRNA. This chain is Ribosomal RNA small subunit methyltransferase G, found in Leuconostoc citreum (strain KM20).